Consider the following 211-residue polypeptide: Histone H1t (211 aa).

A1 is modified (N-acetylalanine). Residues 1-16 (AETAPAAPADSVPASV) show a composition bias toward low complexity. Residues 1–42 (AETAPAAPADSVPASVEKPPAKKRGKKPVGLTGTSRKAPSAS) form a disordered region. Residues 32 to 42 (TGTSRKAPSAS) show a composition bias toward polar residues. One can recognise an H15 domain in the interval 39–112 (PSASVSKLIT…GASGSFKLSK (74 aa)). R57 is modified (citrulline). The tract at residues 101–211 (GTGASGSFKL…TNPRKATNRK (111 aa)) is disordered. Over residues 121–135 (GKVKKPAAAKTKKLV) the composition is skewed to basic residues. S142 carries the post-translational modification Phosphoserine. Residues 147–156 (KANKRAKKSR) show a composition bias toward basic residues. The residue at position 158 (T158) is a Phosphothreonine. A phosphoserine mark is found at S166 and S181. Positions 176–189 (KQQRKSPAKARAAK) are enriched in basic residues.

This sequence belongs to the histone H1/H5 family. Post-translationally, phosphorylated in early spermatids. Citrullination at Arg-57 (H1R54ci) by PADI4 takes place within the DNA-binding site of H1 and results in its displacement from chromatin and global chromatin decondensation, thereby promoting pluripotency and stem cell maintenance. As to expression, testis-specific.

The protein localises to the nucleus. The protein resides in the chromosome. In terms of biological role, testis-specific histone H1 that forms less compacted chromatin compared to other H1 histone subtypes. Formation of more relaxed chromatin may be required to promote chromatin architecture required for proper chromosome regulation during meiosis, such as homologous recombination. Histones H1 act as linkers that bind to nucleosomes and compact polynucleosomes into a higher-order chromatin configuration. This chain is Histone H1t, found in Sus scrofa (Pig).